The chain runs to 521 residues: Glucose-1-phosphate adenylyltransferase large subunit 2, chloroplastic/amyloplastic (521 aa).

A chloroplast-targeting transit peptide spans 1–47 (MQFSSVLPLEGKACMSPVRRGSGGYGSERMRINCCSIRRNKALRRMC).

This sequence belongs to the bacterial/plant glucose-1-phosphate adenylyltransferase family. Heterotetramer. Abundant in the embryo and is also present in the endosperm.

It localises to the plastid. It is found in the chloroplast. The protein localises to the amyloplast. The enzyme catalyses alpha-D-glucose 1-phosphate + ATP + H(+) = ADP-alpha-D-glucose + diphosphate. It participates in glycan biosynthesis; starch biosynthesis. Activated by 3'phosphoglycerate, inhibited by orthophosphate. Allosteric regulation. Functionally, this protein plays a role in synthesis of starch. It catalyzes the synthesis of the activated glycosyl donor, ADP-glucose from Glc-1-P and ATP. This chain is Glucose-1-phosphate adenylyltransferase large subunit 2, chloroplastic/amyloplastic (AGP2), found in Zea mays (Maize).